We begin with the raw amino-acid sequence, 628 residues long: tRNA (carboxymethyluridine(34)-5-O)-methyltransferase alkbh8 (628 aa).

Positions 43-123 constitute an RRM domain; the sequence is QSLVVANGGL…ITLYLSFVEK (81 aa). In terms of domain architecture, Fe2OG dioxygenase spans 218–335; that stretch reads DPDQLTINQY…RTSFTFRKVR (118 aa). 225-227 contacts 2-oxoglutarate; that stretch reads NQY. Residues His236 and Asp238 each coordinate Fe cation. Zn(2+) is bound at residue His240. His290 is a Fe cation binding site. 2-oxoglutarate contacts are provided by Arg326 and Arg332. 3 residues coordinate Zn(2+): Cys339, Cys341, and Cys347. The tract at residues 410 to 628 is methyltransferase domain; that stretch reads ADVGCGNGKY…GNWCVILEKL (219 aa). The tract at residues 563 to 582 is disordered; that stretch reads PTNKSKVTPENKEQNEKEHG. Over residues 569–582 the composition is skewed to basic and acidic residues; that stretch reads VTPENKEQNEKEHG.

The protein belongs to the alkB family. The cofactor is Fe(2+).

The protein localises to the cytoplasm. The protein resides in the nucleus. It catalyses the reaction 5-(carboxymethyl)uridine(34) in tRNA + S-adenosyl-L-methionine = 5-(2-methoxy-2-oxoethyl)uridine(34) in tRNA + S-adenosyl-L-homocysteine. Its function is as follows. Catalyzes the methylation of 5-carboxymethyl uridine to 5-methylcarboxymethyl uridine at the wobble position of the anticodon loop in tRNA via its methyltransferase domain. Catalyzes the last step in the formation of 5-methylcarboxymethyl uridine at the wobble position of the anticodon loop in target tRNA. Has a preference for tRNA(Arg) and tRNA(Glu), and does not bind tRNA(Lys). Binds tRNA and catalyzes the iron and alpha-ketoglutarate dependent hydroxylation of 5-methylcarboxymethyl uridine at the wobble position of the anticodon loop in tRNA via its dioxygenase domain, giving rise to 5-(S)-methoxycarbonylhydroxymethyluridine; has a preference for tRNA(Gly). Required for normal survival after DNA damage. May inhibit apoptosis and promote cell survival and angiogenesis. This Xenopus tropicalis (Western clawed frog) protein is tRNA (carboxymethyluridine(34)-5-O)-methyltransferase alkbh8 (alkbh8).